The sequence spans 301 residues: ATP synthase F(0) complex subunit B1, mitochondrial (301 aa).

A mitochondrion-targeting transit peptide spans 1 to 21 (MSLSRLSSPQTFSRVFIVARG).

It belongs to the eukaryotic ATPase B chain family. As to quaternary structure, subunit of the F-type ATPase which has 2 components, CF(1) - the catalytic core - and CF(0) - the membrane proton channel.

It localises to the mitochondrion. It is found in the mitochondrion inner membrane. Mitochondrial membrane ATP synthase (F(1)F(0) ATP synthase or Complex V) produces ATP from ADP in the presence of a proton gradient across the membrane which is generated by electron transport complexes of the respiratory chain. F-type ATPases consist of two structural domains, F(1) - containing the extramembraneous catalytic core, and F(0) - containing the membrane proton channel, linked together by a central stalk and a peripheral stalk. During catalysis, ATP synthesis in the catalytic domain of F(1) is coupled via a rotary mechanism of the central stalk subunits to proton translocation. Part of the complex F(0) domain and the peripheric stalk, which acts as a stator to hold the subunits of the catalytic subcomplexes relative to the rotary elements. Plays a role in germline development. This chain is ATP synthase F(0) complex subunit B1, mitochondrial, found in Caenorhabditis elegans.